Here is a 219-residue protein sequence, read N- to C-terminus: Ras-related protein Rab-32A (219 aa).

GTP is bound at residue 22–29 (GDIGTGKT). The Effector region motif lies at 44-52 (YKSTIGVDF). Residues 71–75 (DIAGQ) and 134–137 (NKCD) each bind GTP. Positions 192-219 (NQPIEGTIQPGDLNKQPQPTSTGPSCCK) are disordered. Polar residues predominate over residues 206–219 (KQPQPTSTGPSCCK). Residues Cys-217 and Cys-218 are each lipidated (S-geranylgeranyl cysteine).

This sequence belongs to the small GTPase superfamily. Rab family.

The polypeptide is Ras-related protein Rab-32A (rab32A) (Dictyostelium discoideum (Social amoeba)).